The chain runs to 98 residues: NADH-ubiquinone oxidoreductase chain 4L (98 aa).

3 helical membrane-spanning segments follow: residues 1–21 (MTSTFIITITIFYLGLLGILI), 29–49 (ILLCLELLLISLFLSLTVWAI), and 61–81 (LILLTLSACEASAGLSLMVAL).

It belongs to the complex I subunit 4L family.

The protein resides in the mitochondrion membrane. It catalyses the reaction a ubiquinone + NADH + 5 H(+)(in) = a ubiquinol + NAD(+) + 4 H(+)(out). Functionally, core subunit of the mitochondrial membrane respiratory chain NADH dehydrogenase (Complex I) that is believed to belong to the minimal assembly required for catalysis. Complex I functions in the transfer of electrons from NADH to the respiratory chain. The immediate electron acceptor for the enzyme is believed to be ubiquinone. The sequence is that of NADH-ubiquinone oxidoreductase chain 4L (ND4L) from Patiria pectinifera (Starfish).